A 397-amino-acid chain; its full sequence is Probable peptidoglycan glycosyltransferase FtsW (397 aa).

The Cytoplasmic portion of the chain corresponds to 1–30 (MYGLEMLEKIKLEYDKWACLTPKNSLYDRT). Residues 31–51 (LVWLFLSLLMIGFIMVTSASI) form a helical membrane-spanning segment. Over 52-61 (PVSTRLNNDP) the chain is Periplasmic. Residues 62-82 (FHFAIRDSIYLACSLLAFAFV) form a helical membrane-spanning segment. Over 83 to 94 (VKIPMRNWEKYN) the chain is Cytoplasmic. The chain crosses the membrane as a helical span at residues 95–115 (VPLFLLSLLFLASVLIFGRSV). The Periplasmic segment spans residues 116–126 (NGSIRWIQLGP). Residues 127 to 146 (INFQPAELSKLAIICYFSSF) traverse the membrane as a helical segment. Over 147–158 (YVRKYDEMRNRS) the chain is Cytoplasmic. A run of 2 helical transmembrane segments spans residues 159 to 179 (ASVIRPMVILFLFSSLLLLQP) and 180 to 200 (DLGSVVVLFVLTFTMLFIMGA). A topological domain (cytoplasmic) is located at residue Lys-201. The helical transmembrane segment at 202–222 (VMQFLLLIVTASVSFILLVLT) threads the bilayer. Residues 223–280 (SEYRLKRVTSFLDPFADAYGDGFQLSNAQMAFGQGQLWGQGLGNSVQKLEYLPEAHTD) lie on the Periplasmic side of the membrane. A helical transmembrane segment spans residues 281 to 301 (FVMAVVAEEFGFIGIIFMVVL). Residues 302-325 (LLCLSFRAIKISRDALKLEARFRG) lie on the Cytoplasmic side of the membrane. The chain crosses the membrane as a helical span at residues 326–346 (FFAFGVAIWVFLQGSVNLGVA). The Periplasmic segment spans residues 347 to 356 (SGALPTKGLT). Residues 357-377 (FPLVSYGGSSLVIMSVAIAIL) form a helical membrane-spanning segment. Residues 378 to 397 (LRIDYENRLTRVGHAQIKEP) lie on the Cytoplasmic side of the membrane.

The protein belongs to the SEDS family. FtsW subfamily.

It is found in the cell inner membrane. The catalysed reaction is [GlcNAc-(1-&gt;4)-Mur2Ac(oyl-L-Ala-gamma-D-Glu-L-Lys-D-Ala-D-Ala)](n)-di-trans,octa-cis-undecaprenyl diphosphate + beta-D-GlcNAc-(1-&gt;4)-Mur2Ac(oyl-L-Ala-gamma-D-Glu-L-Lys-D-Ala-D-Ala)-di-trans,octa-cis-undecaprenyl diphosphate = [GlcNAc-(1-&gt;4)-Mur2Ac(oyl-L-Ala-gamma-D-Glu-L-Lys-D-Ala-D-Ala)](n+1)-di-trans,octa-cis-undecaprenyl diphosphate + di-trans,octa-cis-undecaprenyl diphosphate + H(+). It functions in the pathway cell wall biogenesis; peptidoglycan biosynthesis. Functionally, peptidoglycan polymerase that is essential for cell division. The protein is Probable peptidoglycan glycosyltransferase FtsW of Haemophilus ducreyi (strain 35000HP / ATCC 700724).